A 285-amino-acid polypeptide reads, in one-letter code: uncharacterized protein (285 aa).

This is an uncharacterized protein from Mycoplasma pneumoniae (strain ATCC 29342 / M129 / Subtype 1) (Mycoplasmoides pneumoniae).